The sequence spans 598 residues: NADPH-dependent diflavin oxidoreductase 1 (598 aa).

Residues 6 to 150 (LLVLFGSQTG…AIDPWVGDLW (145 aa)) form the Flavodoxin-like domain. FMN contacts are provided by residues 12 to 17 (SQTGTA), 59 to 62 (ATTG), 97 to 106 (LGDSSYAKFN), and Asp132. In terms of domain architecture, FAD-binding FR-type spans 206-448 (LQPFLAPVIT…VRPGSLVFPK (243 aa)). FAD contacts are provided by residues Arg350, 382–385 (RAFS), and 416–419 (GLCS). Residues Thr461, 516–517 (SR), 522–526 (KVYVQ), and Asp559 each bind NADP(+). Residue Trp597 participates in FAD binding.

This sequence belongs to the NADPH-dependent diflavin oxidoreductase NDOR1 family. In the N-terminal section; belongs to the flavodoxin family. The protein in the C-terminal section; belongs to the flavoprotein pyridine nucleotide cytochrome reductase family. Interacts with CIAPIN1; as part of the cytosolic iron-sulfur (Fe-S) protein assembly (CIA) machinery. Interacts with DCPS. The cofactor is FAD. FMN serves as cofactor.

Its subcellular location is the cytoplasm. It localises to the perinuclear region. It catalyses the reaction 2 oxidized [2Fe-2S]-[protein] + NADPH = 2 reduced [2Fe-2S]-[protein] + NADP(+) + H(+). Its function is as follows. NADPH-dependent reductase which is a central component of the cytosolic iron-sulfur (Fe-S) protein assembly (CIA) machinery. Transfers electrons from NADPH via its FAD and FMN prosthetic groups to the [2Fe-2S] cluster of CIAPIN1, another key component of the CIA machinery. In turn, this reduced cluster provides electrons for assembly of cytosolic iron-sulfur cluster proteins. It can also reduce the [2Fe-2S] cluster of CISD1 and activate this protein implicated in Fe/S cluster repair. In vitro can fully activate methionine synthase/MTR in the presence of soluble cytochrome b5/CYB5A. This is NADPH-dependent diflavin oxidoreductase 1 from Mus musculus (Mouse).